Reading from the N-terminus, the 215-residue chain is 3-isopropylmalate dehydratase small subunit (215 aa).

This sequence belongs to the LeuD family. LeuD type 1 subfamily. Heterodimer of LeuC and LeuD.

The enzyme catalyses (2R,3S)-3-isopropylmalate = (2S)-2-isopropylmalate. It functions in the pathway amino-acid biosynthesis; L-leucine biosynthesis; L-leucine from 3-methyl-2-oxobutanoate: step 2/4. Its function is as follows. Catalyzes the isomerization between 2-isopropylmalate and 3-isopropylmalate, via the formation of 2-isopropylmaleate. The protein is 3-isopropylmalate dehydratase small subunit of Polynucleobacter asymbioticus (strain DSM 18221 / CIP 109841 / QLW-P1DMWA-1) (Polynucleobacter necessarius subsp. asymbioticus).